Here is a 145-residue protein sequence, read N- to C-terminus: D-aminoacyl-tRNA deacylase (145 aa).

The short motif at 137–138 (GP) is the Gly-cisPro motif, important for rejection of L-amino acids element.

The protein belongs to the DTD family. As to quaternary structure, homodimer.

The protein localises to the cytoplasm. The enzyme catalyses glycyl-tRNA(Ala) + H2O = tRNA(Ala) + glycine + H(+). It catalyses the reaction a D-aminoacyl-tRNA + H2O = a tRNA + a D-alpha-amino acid + H(+). Functionally, an aminoacyl-tRNA editing enzyme that deacylates mischarged D-aminoacyl-tRNAs. Also deacylates mischarged glycyl-tRNA(Ala), protecting cells against glycine mischarging by AlaRS. Acts via tRNA-based rather than protein-based catalysis; rejects L-amino acids rather than detecting D-amino acids in the active site. By recycling D-aminoacyl-tRNA to D-amino acids and free tRNA molecules, this enzyme counteracts the toxicity associated with the formation of D-aminoacyl-tRNA entities in vivo and helps enforce protein L-homochirality. The protein is D-aminoacyl-tRNA deacylase of Pseudomonas putida (strain GB-1).